The chain runs to 140 residues: MRIMGLDVGTKTIGVALSDPLGWTAQGLTTIRRRNLAADLAALKELVRRYGVEELVVGLPRNMNGSLGPQAEAVRAFARHLQAEVGLPVHFFDERLTTVAAGRVLLEADLSRRRRRQVIDQVAATYILQGYLDRLGQNGV.

Belongs to the YqgF nuclease family.

The protein localises to the cytoplasm. Its function is as follows. Could be a nuclease involved in processing of the 5'-end of pre-16S rRNA. The protein is Putative pre-16S rRNA nuclease of Moorella thermoacetica (strain ATCC 39073 / JCM 9320).